A 97-amino-acid chain; its full sequence is Apolipoprotein C-II (97 aa).

The signal sequence occupies residues 1–22 (MGSRFFLALFLALLVLGNEVQG). The lipid binding stretch occupies residues 63 to 71 (SVDEKLRDM). The tract at residues 75–97 (SSAAMTTYAGIFTDQLLTLLKGE) is lipoprotein lipase cofactor.

It belongs to the apolipoprotein C2 family. In terms of processing, proapolipoprotein C-II is synthesized as a sialic acid containing glycoprotein which is subsequently desialylated prior to its proteolytic processing. Proapolipoprotein C-II, the major form found in plasma undergoes proteolytic cleavage of its N-terminal hexapeptide to generate the mature form apolipoprotein C-II, which occurs as the minor form in plasma.

The protein resides in the secreted. Functionally, component of chylomicrons, very low-density lipoproteins (VLDL), low-density lipoproteins (LDL), and high-density lipoproteins (HDL) in plasma. Plays an important role in lipoprotein metabolism as an activator of lipoprotein lipase. The chain is Apolipoprotein C-II (Apoc2) from Rattus norvegicus (Rat).